The following is a 1320-amino-acid chain: Immunoglobulin superfamily member 1 (1320 aa).

A signal peptide spans 1 to 18 (MMLRTFTLLLLCIWLNRG). Topologically, residues 19 to 504 (MTSMAAVESQ…LPWNSILNEA (486 aa)) are extracellular. 5 consecutive Ig-like C2-type domains span residues 29-113 (PELW…KILE), 115-212 (EAPG…KLVV), 224-308 (HPGP…IWVT), 312-399 (PKTW…ATYN), and 401-482 (VELI…HRSE). A glycan (N-linked (GlcNAc...) asparagine) is linked at Asn-44. Cys-49 and Cys-97 are disulfide-bonded. N-linked (GlcNAc...) asparagine glycans are attached at residues Asn-329, Asn-365, and Asn-372. Intrachain disulfides connect Cys-334–Cys-383 and Cys-423–Cys-466. A helical membrane pass occupies residues 505–525 (IRVSLTVQFLSLLLLVLWLQW). Residues 526–534 (KCRRLRLRE) are Cytoplasmic-facing. The chain crosses the membrane as a helical span at residues 535-555 (AWLLGTAQGVAMLVILIALLC). The Extracellular portion of the chain corresponds to 556–1320 (CGLCNGALTE…GVSVEQTVPI (765 aa)). Ig-like C2-type domains are found at residues 572–665 (PTPK…VGTD), 662–756 (VGTD…ELVI), 761–853 (PKPF…LIVT), 857–942 (PKPT…YLST), 949–1044 (TDTF…ELIV), 1049–1134 (PKPS…NHSN), and 1145–1226 (PKPS…EPSD). N-linked (GlcNAc...) asparagine glycans are attached at residues Asn-591, Asn-731, Asn-782, Asn-830, Asn-874, Asn-923, Asn-970, Asn-1011, and Asn-1066. Cysteines 783 and 833 form a disulfide. A disulfide bond links Cys-879 and Cys-926. Cys-1071 and Cys-1118 are joined by a disulfide. N-linked (GlcNAc...) asparagine glycosylation is found at Asn-1131 and Asn-1207. The cysteines at positions 1167 and 1210 are disulfide-linked.

As to quaternary structure, interacts with INHA; the interaction is not confirmed by standard receptor binding assays. Interacts with ACVR1B; the interaction appears to be ligand-dependent as it is diminished by inhibin B and activin A. Interacts with ACVR2A, ACVR2B, ACVRL1 and BMPR1B. Interacts with HECTD1. In terms of tissue distribution, expressed in pituitary gland, testis and liver. Isoform 2 is expressed pituitary gland and testis.

It is found in the membrane. The protein localises to the secreted. Seems to be a coreceptor in inhibin signaling, but seems not to be a high-affinity inhibin receptor. Antagonizes activin A signaling in the presence or absence of inhibin B. Necessary to mediate a specific antagonistic effect of inhibin B on activin-stimulated transcription. The polypeptide is Immunoglobulin superfamily member 1 (Igsf1) (Rattus norvegicus (Rat)).